The chain runs to 438 residues: Trigger factor (438 aa).

The 86-residue stretch at 163–248 (GDIITIDYEG…VKEIKRKELA (86 aa)) folds into the PPIase FKBP-type domain.

Belongs to the FKBP-type PPIase family. Tig subfamily.

The protein localises to the cytoplasm. The enzyme catalyses [protein]-peptidylproline (omega=180) = [protein]-peptidylproline (omega=0). Functionally, involved in protein export. Acts as a chaperone by maintaining the newly synthesized protein in an open conformation. Functions as a peptidyl-prolyl cis-trans isomerase. This chain is Trigger factor, found in Desulforudis audaxviator (strain MP104C).